A 131-amino-acid chain; its full sequence is Large ribosomal subunit protein bL17 (131 aa).

It belongs to the bacterial ribosomal protein bL17 family. In terms of assembly, part of the 50S ribosomal subunit. Contacts protein L32.

In Shewanella oneidensis (strain ATCC 700550 / JCM 31522 / CIP 106686 / LMG 19005 / NCIMB 14063 / MR-1), this protein is Large ribosomal subunit protein bL17.